Reading from the N-terminus, the 122-residue chain is Autophagy-related protein 8a (122 aa).

The disordered stretch occupies residues 1 to 21 (MAKSSFKISNPLEARMSESSR). G117 carries the Phosphatidylethanolamine amidated glycine lipid modification. A propeptide spans 118-122 (SLTVA) (removed in mature form).

This sequence belongs to the ATG8 family. Interacts with ATG4B. Interacts with NBR1. Post-translationally, the C-terminal 5 residues are removed by ATG4 to expose Gly-117 at the C-terminus. This Gly-117 forms then a thioester bond with the 'Cys-558' of ATG7 (E1-like activating enzyme) before being transferred to the 'Cys-258' of ATG3 (the specific E2 conjugating enzyme), in order to be finally amidated with phosphatidylethanolamine. This lipid modification anchors ATG8 to autophagosomes. Constitutively expressed.

The protein resides in the cytoplasmic vesicle. It is found in the autophagosome membrane. It localises to the vacuole membrane. Its subcellular location is the cytoplasm. The protein localises to the cytoskeleton. Ubiquitin-like modifier involved in autophagosomes formation. May mediate the delivery of the autophagosomes to the vacuole via the microtubule cytoskeleton. The protein is Autophagy-related protein 8a (ATG8A) of Arabidopsis thaliana (Mouse-ear cress).